The sequence spans 651 residues: UvrABC system protein C (651 aa).

Residues 20–97 (ERCGVYRMFD…IKKFQPKFNI (78 aa)) enclose the GIY-YIG domain. Residues 207 to 242 (KALQENLSKKMEELSSQMRFEEAAEIRDRIKALSYV) enclose the UVR domain.

This sequence belongs to the UvrC family. Interacts with UvrB in an incision complex.

The protein resides in the cytoplasm. The UvrABC repair system catalyzes the recognition and processing of DNA lesions. UvrC both incises the 5' and 3' sides of the lesion. The N-terminal half is responsible for the 3' incision and the C-terminal half is responsible for the 5' incision. This is UvrABC system protein C from Rickettsia akari (strain Hartford).